The chain runs to 354 residues: S-adenosylmethionine:tRNA ribosyltransferase-isomerase (354 aa).

Belongs to the QueA family. Monomer.

The protein resides in the cytoplasm. It catalyses the reaction 7-aminomethyl-7-carbaguanosine(34) in tRNA + S-adenosyl-L-methionine = epoxyqueuosine(34) in tRNA + adenine + L-methionine + 2 H(+). The protein operates within tRNA modification; tRNA-queuosine biosynthesis. In terms of biological role, transfers and isomerizes the ribose moiety from AdoMet to the 7-aminomethyl group of 7-deazaguanine (preQ1-tRNA) to give epoxyqueuosine (oQ-tRNA). This chain is S-adenosylmethionine:tRNA ribosyltransferase-isomerase, found in Pseudomonas savastanoi pv. phaseolicola (strain 1448A / Race 6) (Pseudomonas syringae pv. phaseolicola (strain 1448A / Race 6)).